The sequence spans 467 residues: Replication factor A 51 kDa subunit (467 aa).

Positions tryptophan 23–threonine 105 form a DNA-binding region, OB. The segment at cysteine 313 to cysteine 335 adopts a C4-type zinc-finger fold.

It belongs to the replication factor A protein 1 family. As to quaternary structure, component of the heterotrimeric canonical replication protein A complex (RPA). In terms of processing, the N-terminus is blocked.

It is found in the nucleus. Functionally, as part of the heterotrimeric replication protein A complex (RPA/RP-A), binds and stabilizes single-stranded DNA intermediates, that form during DNA replication or upon DNA stress. It prevents their reannealing and in parallel, recruits and activates different proteins and complexes involved in DNA metabolism. Thereby, it plays an essential role both in DNA replication and the cellular response to DNA damage. This Crithidia fasciculata protein is Replication factor A 51 kDa subunit (RPA1).